The sequence spans 393 residues: AKTTPPSVYPLAPGSAAQTNSMVTLGCLVKGYFPEPVTVTWNSGSLSSGVHTFPAVLQSDLYTLSSSVTVPSSPRPSETVTCNVAHPASSTKVDKKIVPRDCGCKPCICTVPEVSSVFIFPPKPKDVLTITLTPKVTCVVVDISKDDPEVQFSWFVDDVEVHTAQTQPREEQFNSTFRSVSELPIMHQDWLNGKEFKCRVNSAAFPAPIEKTISKTKGRPKAPQVYTIPPPKEQMAKDKVSLTCMITDFFPEDITVEWQWNGQPAENYKNTQPIMNTNGSYFVYSKLNVQKSNWEAGNTFTCSVLHEGLHNHHTEKSLSHSPGLQLDETCAEAQDGELDGLWTTITIFISLFLLSVCYSAAVTLFKVKWIFSSVVELKQTLVPEYKNMIGQAP.

The segment at Ala-1–Ile-97 is CH1. Cys-27 and Cys-82 are oxidised to a cystine. The interval Val-98 to Thr-110 is hinge. A CH2 region spans residues Val-111–Lys-217. Cystine bridges form between Cys-138–Cys-198 and Cys-244–Cys-302. Asn-174 carries an N-linked (GlcNAc...) asparagine glycan. The CH3 stretch occupies residues Gly-218–Leu-324. A helical transmembrane segment spans residues Gly-340–Cys-357. Over Tyr-358–Pro-393 the chain is Cytoplasmic.

The protein resides in the cell membrane. This chain is Ig gamma-1 chain C region, membrane-bound form (Ighg1), found in Mus musculus (Mouse).